Here is a 172-residue protein sequence, read N- to C-terminus: RNA pyrophosphohydrolase (172 aa).

Residues 6–149 (GYRPNVGIIL…KRDVYRMALK (144 aa)) enclose the Nudix hydrolase domain. A Nudix box motif is present at residues 38–59 (GGIKYGESPEQAMYRELMEEVG).

It belongs to the Nudix hydrolase family. RppH subfamily. Requires a divalent metal cation as cofactor.

Accelerates the degradation of transcripts by removing pyrophosphate from the 5'-end of triphosphorylated RNA, leading to a more labile monophosphorylated state that can stimulate subsequent ribonuclease cleavage. This Methylobacillus flagellatus (strain ATCC 51484 / DSM 6875 / VKM B-1610 / KT) protein is RNA pyrophosphohydrolase.